The primary structure comprises 530 residues: Na(+)/H(+) antiporter NhaB (530 aa).

12 consecutive transmembrane segments (helical) span residues 13–33 (FLGK…IINP), 98–118 (LLLV…LFIF), 123–145 (LGIQ…LSAF), 149–166 (LTVI…YSIY), 205–225 (LLMH…VGEP), 238–258 (FGEF…CGIL), 308–328 (IAVW…LIGL), 330–350 (VIIL…GKAF), 356–376 (FTAL…QALF), 393–413 (LALF…VFVG), 451–471 (ATPN…APLI), and 480–500 (IMAL…IVFF).

It belongs to the NhaB Na(+)/H(+) (TC 2.A.34) antiporter family.

It is found in the cell inner membrane. It catalyses the reaction 2 Na(+)(in) + 3 H(+)(out) = 2 Na(+)(out) + 3 H(+)(in). In terms of biological role, na(+)/H(+) antiporter that extrudes sodium in exchange for external protons. The protein is Na(+)/H(+) antiporter NhaB of Vibrio atlanticus (strain LGP32) (Vibrio splendidus (strain Mel32)).